The sequence spans 129 residues: Iron-sulfur cluster assembly 1 homolog, mitochondrial (129 aa).

The N-terminal 12 residues, 1–12 (MASSVVRATVRA), are a transit peptide targeting the mitochondrion. C57, C121, and C123 together coordinate Fe cation.

The protein belongs to the HesB/IscA family.

It localises to the mitochondrion. Involved in the maturation of mitochondrial 4Fe-4S proteins functioning late in the iron-sulfur cluster assembly pathway. Probably involved in the binding of an intermediate of Fe/S cluster assembly. This chain is Iron-sulfur cluster assembly 1 homolog, mitochondrial (ISCA1), found in Gallus gallus (Chicken).